We begin with the raw amino-acid sequence, 630 residues long: Plastin-1 (630 aa).

The residue at position 1 (methionine 1) is an N-acetylmethionine. EF-hand domains are found at residues 11-46 (EELEELQEAFNKIDIDNSGYVSDYELQDLFKEASLP) and 51-86 (KVREIVEKILAVADNNKDSRISFEEFVSLMQELKSK). Ca(2+) contacts are provided by aspartate 24, aspartate 26, serine 28, tyrosine 30, glutamate 35, aspartate 64, asparagine 66, aspartate 68, arginine 70, and glutamate 75. 2 actin-binding regions span residues 108-381 (TSSI…GLHK) and 382-626 (PDNN…GKGL). Calponin-homology (CH) domains follow at residues 122-238 (EEEK…KVGL), 266-377 (LSPE…NTYP), 396-505 (SKEE…RRYT), and 517-626 (KVND…GKGL).

In terms of assembly, monomer. In terms of processing, phosphorylated.

The protein resides in the cytoplasm. It localises to the cell projection. The protein localises to the stereocilium. Its function is as follows. Actin-bundling protein. In the inner ear, it is required for stereocilia formation. Mediates liquid packing of actin filaments that is necessary for stereocilia to grow to their proper dimensions. The protein is Plastin-1 (PLS1) of Bos taurus (Bovine).